The sequence spans 61 residues: MDLKLLDILACPICKGPLQLSEDKTELISKGAGVAYPIRDGIPVMLESEARTLTTDERLDK.

The protein belongs to the UPF0434 family.

The sequence is that of UPF0434 protein Pmen_1615 from Ectopseudomonas mendocina (strain ymp) (Pseudomonas mendocina).